The following is a 163-amino-acid chain: MNILLSIAITTGILSGIWGWVAVSLGLLSWAGFLGCTAYFACPQGGLKGLAISAATLLSGVVWAMVIIYGSALAPHLEILGYVITGIVAFLMCIQAKQLLLSFVPGTFIGACATFAGQGDWKLVLPSLALGLIFGYAMKNSGLWLAARSAKTAHREQEIKNKA.

Topologically, residues 1-2 (MN) are cytoplasmic. A helical membrane pass occupies residues 3-23 (ILLSIAITTGILSGIWGWVAV). Residue Ser-24 is a topological domain, periplasmic. Residues 25–45 (LGLLSWAGFLGCTAYFACPQG) traverse the membrane as a helical segment. Residues 46–48 (GLK) lie on the Cytoplasmic side of the membrane. The chain crosses the membrane as a helical span at residues 49–69 (GLAISAATLLSGVVWAMVIIY). Residues 70 to 71 (GS) are Periplasmic-facing. Residues 72 to 92 (ALAPHLEILGYVITGIVAFLM) form a helical membrane-spanning segment. The Cytoplasmic portion of the chain corresponds to 93–98 (CIQAKQ). The chain crosses the membrane as a helical span at residues 99-119 (LLLSFVPGTFIGACATFAGQG). Topologically, residues 120–122 (DWK) are periplasmic. The chain crosses the membrane as a helical span at residues 123–143 (LVLPSLALGLIFGYAMKNSGL). The Cytoplasmic portion of the chain corresponds to 144–163 (WLAARSAKTAHREQEIKNKA).

It to E.coli YahC.

It is found in the cell inner membrane. The chain is Inner membrane protein YcdZ (ycdZ) from Escherichia coli (strain K12).